The primary structure comprises 343 residues: Heat-inducible transcription repressor HrcA (343 aa).

It belongs to the HrcA family.

Its function is as follows. Negative regulator of class I heat shock genes (grpE-dnaK-dnaJ and groELS operons). Prevents heat-shock induction of these operons. The polypeptide is Heat-inducible transcription repressor HrcA (Thermoanaerobacter sp. (strain X514)).